Consider the following 264-residue polypeptide: uncharacterized protein (264 aa).

A signal peptide spans methionine 1–glycine 22. Cysteine 23 carries the N-palmitoyl cysteine lipid modification. Residue cysteine 23 is the site of S-diacylglycerol cysteine attachment.

This sequence belongs to the staphylococcal tandem lipoprotein family.

Its subcellular location is the cell membrane. This is an uncharacterized protein from Staphylococcus aureus (strain N315).